The chain runs to 191 residues: Potassium-transporting ATPase KdpC subunit (191 aa).

The helical transmembrane segment at 8 to 28 (LFLFLLLLLVTGLAYPLLTTV) threads the bilayer.

This sequence belongs to the KdpC family. The system is composed of three essential subunits: KdpA, KdpB and KdpC.

It localises to the cell inner membrane. Part of the high-affinity ATP-driven potassium transport (or Kdp) system, which catalyzes the hydrolysis of ATP coupled with the electrogenic transport of potassium into the cytoplasm. This subunit acts as a catalytic chaperone that increases the ATP-binding affinity of the ATP-hydrolyzing subunit KdpB by the formation of a transient KdpB/KdpC/ATP ternary complex. The polypeptide is Potassium-transporting ATPase KdpC subunit (Pectobacterium atrosepticum (strain SCRI 1043 / ATCC BAA-672) (Erwinia carotovora subsp. atroseptica)).